Reading from the N-terminus, the 602-residue chain is GTP-binding protein 2 (602 aa).

The disordered stretch occupies residues 16 to 64 (GGGPAVGGTLKARGAGSSSGCGGPKGKKKNGRNRGGKANNPPYLPPEAE). The span at 40–50 (KGKKKNGRNRG) shows a compositional bias: basic residues. Residues 170 to 398 (FLDLRVAVLG…LNILPPLTNS (229 aa)) enclose the tr-type G domain. GTP-binding positions include 179–186 (GNVDSGKS), 260–264 (DLAGH), and 316–319 (SKID).

Belongs to the TRAFAC class translation factor GTPase superfamily. Classic translation factor GTPase family. GTPBP1 subfamily. Predominantly expressed in thymus, spleen, and testis. Expressed at lower levels in brain, lung, kidney, and ovary.

The chain is GTP-binding protein 2 from Homo sapiens (Human).